Reading from the N-terminus, the 181-residue chain is UPF0302 protein LMOf2365_1950 (181 aa).

The protein belongs to the UPF0302 family.

This Listeria monocytogenes serotype 4b (strain F2365) protein is UPF0302 protein LMOf2365_1950.